We begin with the raw amino-acid sequence, 216 residues long: A-type ATP synthase subunit D (216 aa).

It belongs to the V-ATPase D subunit family. Has multiple subunits with at least A(3), B(3), C, D, E, F, H, I and proteolipid K(x). In terms of processing, the N-terminus is blocked.

It is found in the cell membrane. In terms of biological role, component of the A-type ATP synthase that produces ATP from ADP in the presence of a proton gradient across the membrane. This chain is A-type ATP synthase subunit D, found in Sulfurisphaera tokodaii (strain DSM 16993 / JCM 10545 / NBRC 100140 / 7) (Sulfolobus tokodaii).